A 407-amino-acid polypeptide reads, in one-letter code: Arginine deiminase (407 aa).

The active-site Amidino-cysteine intermediate is the C397.

The protein belongs to the arginine deiminase family.

The protein resides in the cytoplasm. The enzyme catalyses L-arginine + H2O = L-citrulline + NH4(+). It functions in the pathway amino-acid degradation; L-arginine degradation via ADI pathway; carbamoyl phosphate from L-arginine: step 1/2. The protein is Arginine deiminase of Escherichia coli O81 (strain ED1a).